Here is a 359-residue protein sequence, read N- to C-terminus: Protein FAM50 homolog (359 aa).

Disordered regions lie at residues 122 to 150 (NLDDDEEEEEEDDEDHDKKQLKIKQEDQP) and 339 to 359 (PYDPTKSYDKYTIKDKDKSKK). The span at 123–136 (LDDDEEEEEEDDED) shows a compositional bias: acidic residues. The span at 137-150 (HDKKQLKIKQEDQP) shows a compositional bias: basic and acidic residues.

This sequence belongs to the FAM50 family.

This is Protein FAM50 homolog from Drosophila melanogaster (Fruit fly).